The chain runs to 299 residues: Polyamine aminopropyltransferase (299 aa).

Residues 6 to 252 (IVLLFALLCT…SLPNQQALQQ (247 aa)) form the PABS domain. S-methyl-5'-thioadenosine contacts are provided by residues Gln-36, Glu-120, and 147 to 148 (DA). Asp-168 acts as the Proton acceptor in catalysis.

This sequence belongs to the spermidine/spermine synthase family. As to quaternary structure, homodimer or homotetramer.

The protein localises to the cytoplasm. It catalyses the reaction S-adenosyl 3-(methylsulfanyl)propylamine + putrescine = S-methyl-5'-thioadenosine + spermidine + H(+). It participates in amine and polyamine biosynthesis; spermidine biosynthesis; spermidine from putrescine: step 1/1. In terms of biological role, catalyzes the irreversible transfer of a propylamine group from the amino donor S-adenosylmethioninamine (decarboxy-AdoMet) to putrescine (1,4-diaminobutane) to yield spermidine. In Vibrio vulnificus (strain CMCP6), this protein is Polyamine aminopropyltransferase.